We begin with the raw amino-acid sequence, 300 residues long: Ribosomal RNA small subunit methyltransferase H (300 aa).

Residues 46–48 (GGH), aspartate 65, phenylalanine 92, aspartate 107, and glutamine 114 contribute to the S-adenosyl-L-methionine site.

This sequence belongs to the methyltransferase superfamily. RsmH family.

The protein localises to the cytoplasm. It carries out the reaction cytidine(1402) in 16S rRNA + S-adenosyl-L-methionine = N(4)-methylcytidine(1402) in 16S rRNA + S-adenosyl-L-homocysteine + H(+). Functionally, specifically methylates the N4 position of cytidine in position 1402 (C1402) of 16S rRNA. This chain is Ribosomal RNA small subunit methyltransferase H, found in Prochlorococcus marinus (strain MIT 9515).